A 502-amino-acid chain; its full sequence is DnaJ homolog subfamily C member 3 homolog (502 aa).

An N-terminal signal peptide occupies residues 1 to 25 (MIVNKKYFLLICIIILISINCLVLA). TPR repeat units follow at residues 29–62 (IENF…IGSD), 69–102 (VSLL…NPDN), 103–136 (IHAR…RPDN), 184–217 (KEVR…EPSS), 218–251 (VAAL…DPDN), 264–297 (FEKS…EPNS), 302–335 (TPLY…DELN), and 336–369 (ADAL…KPND). Asn-51 carries N-linked (GlcNAc...) asparagine glycosylation. Cys-309 and Cys-325 are joined by a disulfide. In terms of domain architecture, J spans 390-457 (DYYKILGIQK…EKRKRYDMGE (68 aa)).

It is found in the secreted. It localises to the endoplasmic reticulum lumen. Functionally, may be involved in the unfolded protein response (UPR) during ER stress. This chain is DnaJ homolog subfamily C member 3 homolog (dnajc3), found in Dictyostelium discoideum (Social amoeba).